Reading from the N-terminus, the 181-residue chain is Peptidyl-tRNA hydrolase (181 aa).

Position 14 (Tyr14) interacts with tRNA. Residue His19 is the Proton acceptor of the active site. Positions 62, 64, and 108 each coordinate tRNA.

It belongs to the PTH family. As to quaternary structure, monomer.

The protein localises to the cytoplasm. The enzyme catalyses an N-acyl-L-alpha-aminoacyl-tRNA + H2O = an N-acyl-L-amino acid + a tRNA + H(+). In terms of biological role, hydrolyzes ribosome-free peptidyl-tRNAs (with 1 or more amino acids incorporated), which drop off the ribosome during protein synthesis, or as a result of ribosome stalling. Its function is as follows. Catalyzes the release of premature peptidyl moieties from peptidyl-tRNA molecules trapped in stalled 50S ribosomal subunits, and thus maintains levels of free tRNAs and 50S ribosomes. In Campylobacter jejuni subsp. jejuni serotype O:23/36 (strain 81-176), this protein is Peptidyl-tRNA hydrolase.